The primary structure comprises 616 residues: Elongation factor 4 (616 aa).

Residues 14–195 form the tr-type G domain; it reads SRIRNFCIIA…EVIRQVPPPV (182 aa). GTP-binding positions include 26 to 31 and 142 to 145; these read DHGKST and NKID.

This sequence belongs to the TRAFAC class translation factor GTPase superfamily. Classic translation factor GTPase family. LepA subfamily.

It is found in the cell membrane. It carries out the reaction GTP + H2O = GDP + phosphate + H(+). In terms of biological role, required for accurate and efficient protein synthesis under certain stress conditions. May act as a fidelity factor of the translation reaction, by catalyzing a one-codon backward translocation of tRNAs on improperly translocated ribosomes. Back-translocation proceeds from a post-translocation (POST) complex to a pre-translocation (PRE) complex, thus giving elongation factor G a second chance to translocate the tRNAs correctly. Binds to ribosomes in a GTP-dependent manner. In Nocardia farcinica (strain IFM 10152), this protein is Elongation factor 4.